The sequence spans 402 residues: Elongation factor Tu (402 aa).

One can recognise a tr-type G domain in the interval 10–212; the sequence is KPHINIGTIG…AVDEYIPEPK (203 aa). Positions 19–26 are G1; the sequence is GHVDHGKT. Residue 19–26 participates in GTP binding; sequence GHVDHGKT. Thr-26 contributes to the Mg(2+) binding site. The segment at 60 to 64 is G2; that stretch reads GITIA. Residues 81–84 are G3; the sequence is DCPG. GTP-binding positions include 81 to 85 and 136 to 139; these read DCPGH and NKED. The interval 136–139 is G4; that stretch reads NKED. The G5 stretch occupies residues 177-179; it reads SAF.

The protein belongs to the TRAFAC class translation factor GTPase superfamily. Classic translation factor GTPase family. EF-Tu/EF-1A subfamily. As to quaternary structure, monomer.

It is found in the cytoplasm. It carries out the reaction GTP + H2O = GDP + phosphate + H(+). Its function is as follows. GTP hydrolase that promotes the GTP-dependent binding of aminoacyl-tRNA to the A-site of ribosomes during protein biosynthesis. The protein is Elongation factor Tu of Sulfurovum sp. (strain NBC37-1).